The following is a 208-amino-acid chain: Large ribosomal subunit protein uL4 (208 aa).

Positions 45 to 89 (RQGTHAHKNRSAVSGGGKKPWRQKGTGRARQGSTRSPQWRGGGTV) are disordered.

This sequence belongs to the universal ribosomal protein uL4 family. Part of the 50S ribosomal subunit.

In terms of biological role, one of the primary rRNA binding proteins, this protein initially binds near the 5'-end of the 23S rRNA. It is important during the early stages of 50S assembly. It makes multiple contacts with different domains of the 23S rRNA in the assembled 50S subunit and ribosome. Its function is as follows. Forms part of the polypeptide exit tunnel. The polypeptide is Large ribosomal subunit protein uL4 (Lactococcus lactis subsp. lactis (strain IL1403) (Streptococcus lactis)).